A 414-amino-acid polypeptide reads, in one-letter code: Serine hydroxymethyltransferase (414 aa).

(6S)-5,6,7,8-tetrahydrofolate is bound by residues leucine 121 and 125–127 (GHL). Lysine 229 is subject to N6-(pyridoxal phosphate)lysine.

This sequence belongs to the SHMT family. As to quaternary structure, homodimer. It depends on pyridoxal 5'-phosphate as a cofactor.

The protein localises to the cytoplasm. It carries out the reaction (6R)-5,10-methylene-5,6,7,8-tetrahydrofolate + glycine + H2O = (6S)-5,6,7,8-tetrahydrofolate + L-serine. It participates in one-carbon metabolism; tetrahydrofolate interconversion. The protein operates within amino-acid biosynthesis; glycine biosynthesis; glycine from L-serine: step 1/1. Its function is as follows. Catalyzes the reversible interconversion of serine and glycine with tetrahydrofolate (THF) serving as the one-carbon carrier. This reaction serves as the major source of one-carbon groups required for the biosynthesis of purines, thymidylate, methionine, and other important biomolecules. Also exhibits THF-independent aldolase activity toward beta-hydroxyamino acids, producing glycine and aldehydes, via a retro-aldol mechanism. The protein is Serine hydroxymethyltransferase of Polynucleobacter asymbioticus (strain DSM 18221 / CIP 109841 / QLW-P1DMWA-1) (Polynucleobacter necessarius subsp. asymbioticus).